The chain runs to 499 residues: Probable cytosol aminopeptidase (499 aa).

Mn(2+) contacts are provided by K263 and D268. Residue K275 is part of the active site. Mn(2+)-binding residues include D286, D345, and E347. Residue R349 is part of the active site.

Belongs to the peptidase M17 family. The cofactor is Mn(2+).

Its subcellular location is the cytoplasm. The catalysed reaction is Release of an N-terminal amino acid, Xaa-|-Yaa-, in which Xaa is preferably Leu, but may be other amino acids including Pro although not Arg or Lys, and Yaa may be Pro. Amino acid amides and methyl esters are also readily hydrolyzed, but rates on arylamides are exceedingly low.. The enzyme catalyses Release of an N-terminal amino acid, preferentially leucine, but not glutamic or aspartic acids.. Presumably involved in the processing and regular turnover of intracellular proteins. Catalyzes the removal of unsubstituted N-terminal amino acids from various peptides. The polypeptide is Probable cytosol aminopeptidase (pepA) (Chlamydia trachomatis serovar D (strain ATCC VR-885 / DSM 19411 / UW-3/Cx)).